The chain runs to 91 residues: MANSPSAKKRAKQAEKRRSHNASLRSMVRTYIKNVVKAIDAKDLDKAKTAYTAAVPVIDRMADKGIIHKNKAARHKSRLNAHIKALGTAAA.

The interval 1–25 (MANSPSAKKRAKQAEKRRSHNASLR) is disordered. Residues 7–20 (AKKRAKQAEKRRSH) are compositionally biased toward basic residues.

The protein belongs to the bacterial ribosomal protein bS20 family.

Its function is as follows. Binds directly to 16S ribosomal RNA. This is Small ribosomal subunit protein bS20 from Azotobacter vinelandii (strain DJ / ATCC BAA-1303).